The following is a 524-amino-acid chain: Translation initiation factor eIF2B subunit delta (524 aa).

The tract at residues 1–173 (MATAAVAVRE…ERQQVPTRKD (173 aa)) is disordered. The residue at position 2 (A2) is an N-acetylalanine. S12 carries the phosphoserine modification. Basic and acidic residues predominate over residues 26 to 40 (AEGREMTQEEKLQLR). Over residues 41–51 (KEKKQQKKKRK) the composition is skewed to basic residues. Position 86 is a phosphothreonine (T86). Basic and acidic residues-rich tracts occupy residues 87-121 (AKEK…RKGD) and 161-173 (KKPE…TRKD). A may bind the chemical integrated stress response (ISR) inhibitor ISRIB region spans residues 171–180 (RKDYGSKVSL).

The protein belongs to the eIF-2B alpha/beta/delta subunits family. Component of the translation initiation factor 2B (eIF2B) complex which is a heterodecamer of two sets of five different subunits: alpha, beta, gamma, delta and epsilon. Subunits alpha, beta and delta comprise a regulatory subcomplex and subunits epsilon and gamma comprise a catalytic subcomplex. Within the complex, the hexameric regulatory complex resides at the center, with the two heterodimeric catalytic subcomplexes bound on opposite sides.

It localises to the cytoplasm. The protein localises to the cytosol. Its activity is regulated as follows. Activated by the chemical integrated stress response (ISR) inhibitor ISRIB which stimulates guanine nucleotide exchange factor activity for both phosphorylated and unphosphorylated eIF2. Its function is as follows. Acts as a component of the translation initiation factor 2B (eIF2B) complex, which catalyzes the exchange of GDP for GTP on eukaryotic initiation factor 2 (eIF2) gamma subunit. Its guanine nucleotide exchange factor activity is repressed when bound to eIF2 complex phosphorylated on the alpha subunit, thereby limiting the amount of methionyl-initiator methionine tRNA available to the ribosome and consequently global translation is repressed. This is Translation initiation factor eIF2B subunit delta (EIF2B4) from Bos taurus (Bovine).